Reading from the N-terminus, the 286-residue chain is Mating type protein A-1 (286 aa).

Residues 40–95 (AAKKKVNGFMSFRSYYSPLFSQLPQKERSPFMTILWQHDPFHNEWNFMCSVYSSIR) constitute a DNA-binding region (alpha box).

This sequence belongs to the MATALPHA1 family.

It is found in the nucleus. In terms of biological role, required for expression of the heterokaryon incompatibility and sexual functions. This chain is Mating type protein A-1 (MTA-1), found in Neurospora africana.